The chain runs to 183 residues: Large ribosomal subunit protein uL6 (183 aa).

Belongs to the universal ribosomal protein uL6 family. Part of the 50S ribosomal subunit.

This protein binds to the 23S rRNA, and is important in its secondary structure. It is located near the subunit interface in the base of the L7/L12 stalk, and near the tRNA binding site of the peptidyltransferase center. This chain is Large ribosomal subunit protein uL6, found in Moorella thermoacetica (strain ATCC 39073 / JCM 9320).